The following is a 295-amino-acid chain: SPX domain-containing protein 1 (295 aa).

One can recognise an SPX domain in the interval 1–166 (MKFGKSLSSQ…GALIRLPFIQ (166 aa)). The tract at residues 197 to 227 (NELPVSSEDGRGDSTNEDKPSNPSSSLVNGG) is disordered. Over residues 204 to 216 (EDGRGDSTNEDKP) the composition is skewed to basic and acidic residues.

As to quaternary structure, interacts (via SPX domain) with PHR2 (via C-terminus). Interacts with RLI1 in the nucleus to prevents its positive regulation of leaf inclination during phosphate (Pi) starvation.

The protein localises to the nucleus. Functionally, involved in plant adaptation to phosphate (Pi) starvation. Inhibits PHR2 DNA-binding activity via a Pi-dependent protein interaction. Suppresses the regulation on expression of PT2 by PHR2 and accumulation of shoot Pi. Optimizes growth under phosphate-limited conditions through a negative feedback loop of the PSI (phosphate starvation-induced) signaling pathway. Regulates the expression of SPX2, SPX3 and SPX5. May be an important link between signal transduction pathways related to phosphate starvation and cold stress. Together with SPX2, plays a negative role in the regulation of leaf inclination by preventing RLI1 transcription factor activity in Pi depleted conditions. In Oryza sativa subsp. indica (Rice), this protein is SPX domain-containing protein 1.